Here is a 336-residue protein sequence, read N- to C-terminus: GTP 3',8-cyclase (336 aa).

A Radical SAM core domain is found at 16-241 (AYRRTYYYLR…QSKGITDGPA (226 aa)). Residue arginine 25 coordinates GTP. [4Fe-4S] cluster is bound by residues cysteine 32 and cysteine 36. Tyrosine 38 provides a ligand contact to S-adenosyl-L-methionine. A [4Fe-4S] cluster-binding site is contributed by cysteine 39. Arginine 75 is a binding site for GTP. Glycine 79 lines the S-adenosyl-L-methionine pocket. Threonine 106 provides a ligand contact to GTP. Serine 130 is a binding site for S-adenosyl-L-methionine. A GTP-binding site is contributed by lysine 167. S-adenosyl-L-methionine is bound at residue methionine 201. The [4Fe-4S] cluster site is built by cysteine 264 and cysteine 267. Residue 269-271 (RLR) coordinates GTP. Cysteine 281 provides a ligand contact to [4Fe-4S] cluster.

Belongs to the radical SAM superfamily. MoaA family. In terms of assembly, monomer and homodimer. Requires [4Fe-4S] cluster as cofactor.

It catalyses the reaction GTP + AH2 + S-adenosyl-L-methionine = (8S)-3',8-cyclo-7,8-dihydroguanosine 5'-triphosphate + 5'-deoxyadenosine + L-methionine + A + H(+). Its pathway is cofactor biosynthesis; molybdopterin biosynthesis. Its function is as follows. Catalyzes the cyclization of GTP to (8S)-3',8-cyclo-7,8-dihydroguanosine 5'-triphosphate. This Actinobacillus succinogenes (strain ATCC 55618 / DSM 22257 / CCUG 43843 / 130Z) protein is GTP 3',8-cyclase.